We begin with the raw amino-acid sequence, 142 residues long: Large ribosomal subunit protein uL13 (142 aa).

It belongs to the universal ribosomal protein uL13 family. In terms of assembly, part of the 50S ribosomal subunit.

This protein is one of the early assembly proteins of the 50S ribosomal subunit, although it is not seen to bind rRNA by itself. It is important during the early stages of 50S assembly. The chain is Large ribosomal subunit protein uL13 from Sodalis glossinidius (strain morsitans).